The sequence spans 347 residues: D-alanine--D-alanine ligase (347 aa).

Positions 134 to 332 (KLYAKDLGVK…LAQSLPKTPK (199 aa)) constitute an ATP-grasp domain. 161 to 216 (LMNFNFPFIIKPNNAGSSLGVNVVKEEKELVYALDGAFEYSKEVLIEPFIQGVKEY) contacts ATP. Mg(2+)-binding residues include Asp-288, Glu-300, and Asn-302.

It belongs to the D-alanine--D-alanine ligase family. It depends on Mg(2+) as a cofactor. Requires Mn(2+) as cofactor.

The protein resides in the cytoplasm. It catalyses the reaction 2 D-alanine + ATP = D-alanyl-D-alanine + ADP + phosphate + H(+). It functions in the pathway cell wall biogenesis; peptidoglycan biosynthesis. Functionally, cell wall formation. This chain is D-alanine--D-alanine ligase, found in Helicobacter pylori (strain ATCC 700392 / 26695) (Campylobacter pylori).